The primary structure comprises 73 residues: RNA-binding protein Hfq (73 aa).

Residues 8 to 68 enclose the Sm domain; that stretch reads DQFLNQIRKD…ISTFAPQKNV (61 aa).

Belongs to the Hfq family. In terms of assembly, homohexamer.

In terms of biological role, RNA chaperone that binds small regulatory RNA (sRNAs) and mRNAs to facilitate mRNA translational regulation in response to envelope stress, environmental stress and changes in metabolite concentrations. Also binds with high specificity to tRNAs. The polypeptide is RNA-binding protein Hfq (Bacillus velezensis (strain DSM 23117 / BGSC 10A6 / LMG 26770 / FZB42) (Bacillus amyloliquefaciens subsp. plantarum)).